We begin with the raw amino-acid sequence, 487 residues long: ATP synthase subunit beta 1 (487 aa).

162-169 (GGAGVGKT) is a binding site for ATP.

This sequence belongs to the ATPase alpha/beta chains family. In terms of assembly, F-type ATPases have 2 components, CF(1) - the catalytic core - and CF(0) - the membrane proton channel. CF(1) has five subunits: alpha(3), beta(3), gamma(1), delta(1), epsilon(1). CF(0) has three main subunits: a(1), b(2) and c(9-12). The alpha and beta chains form an alternating ring which encloses part of the gamma chain. CF(1) is attached to CF(0) by a central stalk formed by the gamma and epsilon chains, while a peripheral stalk is formed by the delta and b chains.

Its subcellular location is the cell inner membrane. The enzyme catalyses ATP + H2O + 4 H(+)(in) = ADP + phosphate + 5 H(+)(out). Its function is as follows. Produces ATP from ADP in the presence of a proton gradient across the membrane. The catalytic sites are hosted primarily by the beta subunits. In Gluconobacter oxydans (strain 621H) (Gluconobacter suboxydans), this protein is ATP synthase subunit beta 1.